We begin with the raw amino-acid sequence, 756 residues long: MKFGKDFSSEWQQAYVDYKYLKTLVKDINRFKRKTNLHGGQISLSSTVLEIEDGITTATIQVSSTASQRYETTFLMTAEKGGEYELVFFRRLDDEFNKVEKFYREKVDEVVKEAAVLNKQMDALIAFRLKMKEESTVEMARFALHGVVSPAELAKNPSMKVHMEAIEEGGSSRAGRRSDEDDYYTDEEDHNDVFFTPANNLSKMKSSSSAFIEVLDSIKINNTKEALQSNTKSVLKVSNHTELKFSRDNLRKIEEKLICAFVEFHRKLWYLKSYSFLNVLALSKILTKYDKITSRDAAKSYMKMVDKSCLGSSDEVMKLMENVEATFIKQFTNGNRTKGMNILRPKPKRERHRLTFSTGFLGGCMFSLIVALVAIVRTRNILQDDGQKQYMNTMFPLYSLFGFIMLHMTMYAANIYFWRQYRVNYSFIFGFKQGTELGYKQVLFVGFSIGALALLCVLANLDMETDPKTKDYQALTELLPLFLLIAMFVVLVVPFNIFYRSSRFFFLTTLFHMLAAPLYKVTLPDFFLADQLCSQAQTLRSIEFYICYYGWGDFKQRKNTCKDSQVFNTFLFIVSAFPFFSRFLQCMRRMLEEKNIEQGYNGFKYIVIVVAVCLGMAYEVDDEKDRQIIWRLLGGITSAMAVVFCTYWDLVYDWGLLNRTSKNPWLRDNLLIPHKEVYVLAMILNVVLRFAWMQTVLDFKFESIHTQTVVAVVASLEIIRRGIWNFFRLENEHLNNVGKYRAFKAVSLPFNYEVDH.

Residues 1 to 303 (MKFGKDFSSE…SRDAAKSYMK (303 aa)) form the SPX domain. Residues 1–355 (MKFGKDFSSE…KPKRERHRLT (355 aa)) are Cytoplasmic-facing. Residues 356 to 376 (FSTGFLGGCMFSLIVALVAIV) traverse the membrane as a helical segment. Over 377 to 396 (RTRNILQDDGQKQYMNTMFP) the chain is Extracellular. A helical membrane pass occupies residues 397-417 (LYSLFGFIMLHMTMYAANIYF). Over 418-440 (WRQYRVNYSFIFGFKQGTELGYK) the chain is Cytoplasmic. The chain crosses the membrane as a helical span at residues 441–461 (QVLFVGFSIGALALLCVLANL). Over 462–477 (DMETDPKTKDYQALTE) the chain is Extracellular. Residues 478–498 (LLPLFLLIAMFVVLVVPFNIF) form a helical membrane-spanning segment. Residues 499-631 (YRSSRFFFLT…DEKDRQIIWR (133 aa)) lie on the Cytoplasmic side of the membrane. An EXS domain is found at 562–756 (KDSQVFNTFL…SLPFNYEVDH (195 aa)). The helical transmembrane segment at 632-652 (LLGGITSAMAVVFCTYWDLVY) threads the bilayer. Topologically, residues 653–676 (DWGLLNRTSKNPWLRDNLLIPHKE) are extracellular. Residues 677–697 (VYVLAMILNVVLRFAWMQTVL) traverse the membrane as a helical segment. The Cytoplasmic segment spans residues 698–756 (DFKFESIHTQTVVAVVASLEIIRRGIWNFFRLENEHLNNVGKYRAFKAVSLPFNYEVDH).

Belongs to the SYG1 (TC 2.A.94) family. In terms of tissue distribution, specifically expressed in anther connective tissue.

The protein localises to the cell membrane. In terms of biological role, may transport inorganic phosphate (Pi). The protein is Phosphate transporter PHO1 homolog 6 (PHO1-H6) of Arabidopsis thaliana (Mouse-ear cress).